A 242-amino-acid chain; its full sequence is MATNAKPVYQRILLKLSGEALQGAEGFGIDASVLDRMAQEVKELVELGVEVGVVIGGGNLFRGAGLAEAGMNRVVGDHMGMLATVMNGLAMRDALHRAYVNARLMSAIPLNGVCDNYSWAEAISLLRHGRVVIFSAGTGNPFFTTDSAACLRGIEIEADVVLKATKVDGVYSADPAKDSEAVLFDKLSYQQVLERELKVMDLAAFTLARDHSLPIRVFNMNKPGALRRVVMGENEGTLIFHE.

Residue Lys-15–Gly-18 coordinates ATP. Residues Gly-23 to Gly-28 form an involved in allosteric activation by GTP region. Residue Gly-57 participates in UMP binding. Residues Gly-58 and Arg-62 each coordinate ATP. UMP contacts are provided by residues Asp-77 and Thr-138 to Thr-145. 3 residues coordinate ATP: Thr-165, Tyr-171, and Asp-174.

Belongs to the UMP kinase family. As to quaternary structure, homohexamer.

It is found in the cytoplasm. It carries out the reaction UMP + ATP = UDP + ADP. It functions in the pathway pyrimidine metabolism; CTP biosynthesis via de novo pathway; UDP from UMP (UMPK route): step 1/1. With respect to regulation, allosterically activated by GTP. Inhibited by UTP. Functionally, catalyzes the reversible phosphorylation of UMP to UDP. This chain is Uridylate kinase, found in Photorhabdus laumondii subsp. laumondii (strain DSM 15139 / CIP 105565 / TT01) (Photorhabdus luminescens subsp. laumondii).